The sequence spans 196 residues: tRNA(Phe) 7-((3-amino-3-carboxypropyl)-4-demethylwyosine(37)-N(4))-methyltransferase 1 (196 aa).

This sequence belongs to the TYW3 family.

It catalyses the reaction 4-demethyl-7-[(3S)-3-amino-3-carboxypropyl]wyosine(37) in tRNA(Phe) + S-adenosyl-L-methionine = 7-[(3S)-3-amino-3-carboxypropyl]wyosine(37) in tRNA(Phe) + S-adenosyl-L-homocysteine + H(+). In terms of biological role, S-adenosyl-L-methionine-dependent methyltransferase that acts as a component of the wyosine derivatives biosynthesis pathway. Probably methylates N-4 position of wybutosine-86 to produce wybutosine-72. In Pyrococcus furiosus (strain ATCC 43587 / DSM 3638 / JCM 8422 / Vc1), this protein is tRNA(Phe) 7-((3-amino-3-carboxypropyl)-4-demethylwyosine(37)-N(4))-methyltransferase 1.